Here is a 145-residue protein sequence, read N- to C-terminus: D-aminoacyl-tRNA deacylase (145 aa).

The Gly-cisPro motif, important for rejection of L-amino acids signature appears at 137–138 (GP).

The protein belongs to the DTD family. In terms of assembly, homodimer.

The protein localises to the cytoplasm. The catalysed reaction is glycyl-tRNA(Ala) + H2O = tRNA(Ala) + glycine + H(+). It catalyses the reaction a D-aminoacyl-tRNA + H2O = a tRNA + a D-alpha-amino acid + H(+). Its function is as follows. An aminoacyl-tRNA editing enzyme that deacylates mischarged D-aminoacyl-tRNAs. Also deacylates mischarged glycyl-tRNA(Ala), protecting cells against glycine mischarging by AlaRS. Acts via tRNA-based rather than protein-based catalysis; rejects L-amino acids rather than detecting D-amino acids in the active site. By recycling D-aminoacyl-tRNA to D-amino acids and free tRNA molecules, this enzyme counteracts the toxicity associated with the formation of D-aminoacyl-tRNA entities in vivo and helps enforce protein L-homochirality. This chain is D-aminoacyl-tRNA deacylase, found in Shewanella amazonensis (strain ATCC BAA-1098 / SB2B).